The primary structure comprises 588 residues: Complement component C8 beta chain (588 aa).

Residues M1 to A30 form the signal peptide. Positions A31–R46 are excised as a propeptide. Residues D58–D113 enclose the TSP type-1 1 domain. 7 disulfide bridges follow: C59/C94, C70/C104, C73/C112, C118/C129, C123/C142, C136/C151, and C158/C196. W64 and W67 each carry a C-linked (Man) tryptophan glycan. The 38-residue stretch at I115–K152 folds into the LDL-receptor class A domain. Residues L134, N137, E139, D141, D147, and E148 each contribute to the Ca(2+) site. The 347-residue stretch at V154–R500 folds into the MACPF domain. 4 beta stranded membrane-spanning segments follow: residues T248–A255, G258–N265, T375–G382, and V388–E395. 5 disulfide bridges follow: C374-C399, C499-C547, C501-C517, C504-C519, and C521-C530. Positions C501–E531 constitute an EGF-like domain. In terms of domain architecture, TSP type-1 2 spans D542–F588. C-linked (Man) tryptophan glycans are attached at residues W548 and W551. A disulfide bond links C554 and C587.

This sequence belongs to the complement C6/C7/C8/C9 family. Heterotrimer of 3 chains: alpha (C8A), beta (C8B) and gamma (C8G); the alpha and gamma chains are disulfide bonded. Component of the membrane attack complex (MAC), composed of complement C5b, C6, C7, C8A, C8B, C8G and multiple copies of the pore-forming subunit C9.

It is found in the secreted. It localises to the target cell membrane. Functionally, component of the membrane attack complex (MAC), a multiprotein complex activated by the complement cascade, which inserts into a target cell membrane and forms a pore, leading to target cell membrane rupture and cell lysis. The MAC is initiated by proteolytic cleavage of C5 into complement C5b in response to the classical, alternative, lectin and GZMK complement pathways. The complement pathways consist in a cascade of proteins that leads to phagocytosis and breakdown of pathogens and signaling that strengthens the adaptive immune system. C8B, together with C8A and C8G, inserts into the target membrane, but does not form pores by itself. During MAC assembly, associates with C5b, C6 and C7 to form the C5b8 intermediate complex that inserts into the target membrane and traverses the bilayer increasing membrane rigidity. This is Complement component C8 beta chain (c8b) from Paralichthys olivaceus (Bastard halibut).